The primary structure comprises 304 residues: Putative integrase/recombinase HI_1414 (304 aa).

In terms of domain architecture, Core-binding (CB) spans 30–109 (TLFSDVIKRY…TIGHIFKIAL (80 aa)). In terms of domain architecture, Tyr recombinase spans 131-304 (PRTQRVTEEN…DMAEVAELLD (174 aa)). Residues R174, K199, H256, R259, and H281 contribute to the active site. Y291 acts as the O-(3'-phospho-DNA)-tyrosine intermediate in catalysis.

It belongs to the 'phage' integrase family.

In Haemophilus influenzae (strain ATCC 51907 / DSM 11121 / KW20 / Rd), this protein is Putative integrase/recombinase HI_1414.